The primary structure comprises 179 residues: Large ribosomal subunit protein uL5 (179 aa).

The protein belongs to the universal ribosomal protein uL5 family. Part of the 50S ribosomal subunit; part of the 5S rRNA/L5/L18/L25 subcomplex. Contacts the 5S rRNA and the P site tRNA. Forms a bridge to the 30S subunit in the 70S ribosome.

In terms of biological role, this is one of the proteins that bind and probably mediate the attachment of the 5S RNA into the large ribosomal subunit, where it forms part of the central protuberance. In the 70S ribosome it contacts protein S13 of the 30S subunit (bridge B1b), connecting the 2 subunits; this bridge is implicated in subunit movement. Contacts the P site tRNA; the 5S rRNA and some of its associated proteins might help stabilize positioning of ribosome-bound tRNAs. This chain is Large ribosomal subunit protein uL5, found in Vibrio vulnificus (strain CMCP6).